Here is a 257-residue protein sequence, read N- to C-terminus: Glutamate racemase (257 aa).

Substrate is bound by residues D12 to S13 and Y44 to G45. Catalysis depends on C75, which acts as the Proton donor/acceptor. Residue N76–T77 coordinates substrate. C185 serves as the catalytic Proton donor/acceptor. T186–H187 serves as a coordination point for substrate.

It belongs to the aspartate/glutamate racemases family.

The enzyme catalyses L-glutamate = D-glutamate. It functions in the pathway cell wall biogenesis; peptidoglycan biosynthesis. In terms of biological role, provides the (R)-glutamate required for cell wall biosynthesis. The polypeptide is Glutamate racemase (Clostridium botulinum (strain Langeland / NCTC 10281 / Type F)).